Consider the following 370-residue polypeptide: Homospermidine synthase 1 (370 aa).

This sequence belongs to the deoxyhypusine synthase family. In terms of assembly, homotetramer. It depends on NAD(+) as a cofactor. Post-translationally, the N-terminus is blocked. In terms of tissue distribution, expressed in roots.

The enzyme catalyses putrescine + spermidine = sym-homospermidine + propane-1,3-diamine. It participates in alkaloid biosynthesis; pyrrolizidine alkaloid biosynthesis. Catalyzes the transfer of an aminobutyl unit from spermidine onto putrescine. The resulting polyamine homospermidine is a precursor in the biosynthesis of pyrrolizidine alkaloids. This Senecio vernalis (Spring groundsel) protein is Homospermidine synthase 1 (HSS1).